Here is a 427-residue protein sequence, read N- to C-terminus: Enolase (427 aa).

(2R)-2-phosphoglycerate is bound at residue Gln-164. Glu-206 functions as the Proton donor in the catalytic mechanism. 3 residues coordinate Mg(2+): Asp-243, Glu-284, and Asp-311. 4 residues coordinate (2R)-2-phosphoglycerate: Lys-336, Arg-365, Ser-366, and Lys-387. The active-site Proton acceptor is Lys-336.

The protein belongs to the enolase family. It depends on Mg(2+) as a cofactor.

It localises to the cytoplasm. It is found in the secreted. The protein localises to the cell surface. It carries out the reaction (2R)-2-phosphoglycerate = phosphoenolpyruvate + H2O. The protein operates within carbohydrate degradation; glycolysis; pyruvate from D-glyceraldehyde 3-phosphate: step 4/5. Its function is as follows. Catalyzes the reversible conversion of 2-phosphoglycerate (2-PG) into phosphoenolpyruvate (PEP). It is essential for the degradation of carbohydrates via glycolysis. This chain is Enolase, found in Synechococcus sp. (strain JA-2-3B'a(2-13)) (Cyanobacteria bacterium Yellowstone B-Prime).